Consider the following 931-residue polypeptide: Adhesion G protein-coupled receptor E1 (931 aa).

Positions 1–27 (MWGFWLLLFWGFSGMYRWGMTTLPTLG) are cleaved as a signal peptide. The Extracellular segment spans residues 28–644 (QTLGGVNECQ…IMASGELTME (617 aa)). 2 EGF-like domains span residues 32 to 80 (GVNE…VECQ) and 81 to 132 (DVNE…FLCA). 21 disulfides stabilise this stretch: Cys36–Cys48, Cys42–Cys57, Cys59–Cys79, Cys85–Cys98, Cys92–Cys107, Cys109–Cys131, Cys137–Cys149, Cys143–Cys158, Cys160–Cys171, Cys177–Cys189, Cys183–Cys198, Cys200–Cys220, Cys226–Cys239, Cys233–Cys248, Cys250–Cys270, Cys276–Cys286, Cys280–Cys295, Cys297–Cys317, Cys323–Cys336, Cys330–Cys345, and Cys347–Cys366. Positions 133 to 172 (DVDECLTIGICPKYSNCSNSVGSYSCTCQPGFVLNGSICE) constitute an EGF-like 3; calcium-binding domain. Asn148 and Asn167 each carry an N-linked (GlcNAc...) asparagine glycan. In terms of domain architecture, EGF-like 4; calcium-binding spans 173 to 221 (DEDECVTRDVCPEHATCHNTLGSYYCTCNSGLESSGGGPMFQGLDESCE). The EGF-like 5; calcium-binding domain maps to 222-271 (DVDECSRNSTLCGPTFICINTLGSYSCSCPAGFSLPTFQILGHPADGNCT). Residue Asn229 is glycosylated (N-linked (GlcNAc...) asparagine). N-linked (GlcNAc...) asparagine glycans are attached at residues Asn269 and Asn283. The EGF-like 6; calcium-binding domain maps to 272-318 (DIDECDDTCPLNSSCTNTIGSYFCTCHPGFASSNGQLNFKDLEVTCE). The EGF-like 7; calcium-binding domain maps to 319–367 (DIDECTQDPLQCGLNSVCTNVPGSYICGCLPDFQMDPEGSQGYGNFNCK). 4 N-linked (GlcNAc...) asparagine glycosylation sites follow: Asn405, Asn417, Asn474, and Asn498. The GAIN-B domain occupies 482–642 (EYLDIESKVI…AIIMASGELT (161 aa)). A Cell attachment site motif is present at residues 506-508 (RGD). Disulfide bonds link Cys595–Cys624 and Cys612–Cys626. A GPS region spans residues 595 to 642 (CVSWNTDVEDGRWTPSGCEIVEASETHTVCSCNRMANLAIIMASGELT). Residues 645–672 (FSLYIISHVGTVISLVCLALAIATFLLC) form a helical membrane-spanning segment. The Cytoplasmic segment spans residues 673 to 679 (RAVQNHN). A helical membrane pass occupies residues 680–701 (TYMHLHLCVCLFLAKILFLTGI). Residues 702-711 (DKTDNQTACA) are Extracellular-facing. N-linked (GlcNAc...) asparagine glycosylation is present at Asn706. The chain crosses the membrane as a helical span at residues 712-735 (IIAGFLHYLFLACFFWMLVEAVML). Residues 736-754 (FLMVRNLKVVNYFSSRNIK) lie on the Cytoplasmic side of the membrane. Residues 755-776 (MLHLCAFGYGLPVLVVIISASV) form a helical membrane-spanning segment. Over 777–792 (QPRGYGMHNRCWLNTE) the chain is Extracellular. Residues 793–821 (TGFIWSFLGPVCMIITINSVLLAWTLWVL) form a helical membrane-spanning segment. Over 822–839 (RQKLCSVSSEVSKLKDTR) the chain is Cytoplasmic. Residues 840-859 (LLTFKAIAQIFILGCSWVLG) form a helical membrane-spanning segment. Residues 860 to 874 (IFQIGPLASIMAYLF) lie on the Extracellular side of the membrane. The helical transmembrane segment at 875–897 (TIINSLQGAFIFLIHCLLNRQVR) threads the bilayer. Over 898 to 931 (DEYKKLLTRKTDLSSHSQTSGILLSSMPSTSKMG) the chain is Cytoplasmic.

This sequence belongs to the G-protein coupled receptor 2 family. Adhesion G-protein coupled receptor (ADGR) subfamily. As to expression, in macrophages; but absent from those which are localized within T-cell areas of lymph nodes and spleen. Low level of expression on blood monocytes.

It localises to the cell membrane. Orphan receptor involved in cell adhesion and probably in cell-cell interactions specifically involving cells of the immune system. May play a role in regulatory T-cells (Treg) development. In Mus musculus (Mouse), this protein is Adhesion G protein-coupled receptor E1 (Adgre1).